The primary structure comprises 198 residues: Ribosome maturation factor RimP (198 aa).

Belongs to the RimP family.

The protein resides in the cytoplasm. Required for maturation of 30S ribosomal subunits. The sequence is that of Ribosome maturation factor RimP from Rhizobium etli (strain ATCC 51251 / DSM 11541 / JCM 21823 / NBRC 15573 / CFN 42).